Consider the following 177-residue polypeptide: Large ribosomal subunit protein uL6 (177 aa).

It belongs to the universal ribosomal protein uL6 family. As to quaternary structure, part of the 50S ribosomal subunit.

Its function is as follows. This protein binds to the 23S rRNA, and is important in its secondary structure. It is located near the subunit interface in the base of the L7/L12 stalk, and near the tRNA binding site of the peptidyltransferase center. The sequence is that of Large ribosomal subunit protein uL6 from Neisseria meningitidis serogroup B (strain ATCC BAA-335 / MC58).